The following is a 429-amino-acid chain: Serine/threonine-protein kinase BGLF4 (429 aa).

The tract at residues 1–27 is disordered; it reads MDVNMAAELSPTNSSSSGELSVSPEPP. The Protein kinase domain occupies 1-409; the sequence is MDVNMAAELS…CRPRFEHPHL (409 aa). Positions 14-23 are enriched in low complexity; that stretch reads SSSSGELSVS. An SUMO interaction motif region spans residues 36 to 40; sequence KVTVI. ATP contacts are provided by residues 110–118 and Glu-128; that span reads LYHELMVCD. Asp-195 acts as the Proton acceptor in catalysis. Positions 344–350 are SUMO interaction motif; sequence VVLLEVL.

Belongs to the protein kinase superfamily. Ser/Thr protein kinase family. Interacts with host NUP62 and NUP153; this interaction plays a role in nuclear targeting of BGLF4. Interacts with host SUMO1 and SUMO2.

It is found in the virion tegument. It localises to the host nucleus. It carries out the reaction L-seryl-[protein] + ATP = O-phospho-L-seryl-[protein] + ADP + H(+). It catalyses the reaction L-threonyl-[protein] + ATP = O-phospho-L-threonyl-[protein] + ADP + H(+). In terms of biological role, plays many key roles by phosphorylating several proteins including the viral DNA processivity factor BMRF1, EBNA1 or EBNA2. Modifies the host nuclear envelope structure and induces the redistribution of nuclear envelope-associated proteins by phosphorylating host nucleoporins. Subsequently, promotes the nuclear transport of EBV lytic proteins. Required for efficient lytic DNA replication and release of nucleocapsids from the nucleus. Contributes to the compaction of host cell chromatin in cells undergoing lytic replication, presumably by phosphorylating the host condensin complex and host TOP2A. Induces disassembly of the nuclear lamina by phosphorylating with host LMNA. Phosphorylates substrates involved in capsid assembly and DNA packaging. Facilitates the switch from latent to lytic DNA replication by down-regulating EBNA1 replication function. Phosphorylates the viral immediate-early protein BZLF1 and inhibits its sumoylation by interacting with host SUMO1 and SUMO2. Phosphorylates also host SAMHD1 and thereby counteracts its antiviral effect by reducing its dNTP hydrolase activity. The sequence is that of Serine/threonine-protein kinase BGLF4 from Epstein-Barr virus (strain AG876) (HHV-4).